Consider the following 235-residue polypeptide: uncharacterized protein (235 aa).

The S4 RNA-binding domain maps to 2 to 69 (CRLAKIISNA…KPRLWIYYKP (68 aa)). Asp102 serves as the catalytic Nucleophile.

The protein belongs to the pseudouridine synthase RsuA family.

The enzyme catalyses a uridine in RNA = a pseudouridine in RNA. This is an uncharacterized protein from Rickettsia prowazekii (strain Madrid E).